The primary structure comprises 108 residues: Large ribosomal subunit protein bL21c (108 aa).

This sequence belongs to the bacterial ribosomal protein bL21 family. Part of the 50S ribosomal subunit.

It localises to the plastid. The protein localises to the chloroplast. In terms of biological role, this protein binds to 23S rRNA. This chain is Large ribosomal subunit protein bL21c, found in Cyanidium caldarium (Red alga).